A 424-amino-acid polypeptide reads, in one-letter code: DNA primase DnaG (424 aa).

Residues 166-241 (DTIIIVEGRA…KVDFIARAPE (76 aa)) enclose the Toprim domain. Positions 172, 215, and 217 each coordinate Mg(2+).

The protein belongs to the archaeal DnaG primase family. In terms of assembly, forms a ternary complex with MCM helicase and DNA. Component of the archaeal exosome complex. Mg(2+) is required as a cofactor.

The enzyme catalyses ssDNA + n NTP = ssDNA/pppN(pN)n-1 hybrid + (n-1) diphosphate.. RNA polymerase that catalyzes the synthesis of short RNA molecules used as primers for DNA polymerase during DNA replication. Also part of the exosome, which is a complex involved in RNA degradation. Acts as a poly(A)-binding protein that enhances the interaction between heteromeric, adenine-rich transcripts and the exosome. This chain is DNA primase DnaG, found in Staphylothermus marinus (strain ATCC 43588 / DSM 3639 / JCM 9404 / F1).